Here is a 145-residue protein sequence, read N- to C-terminus: Secreted RxLR effector protein PSE1 (145 aa).

The N-terminal stretch at 1-21 is a signal peptide; the sequence is MRLSSFIVVGAAVVNLLTSGS. Residues 53–73 carry the RxLR-dEER motif; it reads RLLRYHSNNNRGGDEDIAEER.

The protein belongs to the RxLR effector family.

The protein localises to the secreted. The protein resides in the host cell. Functionally, secreted effector that impairs both plant effector-triggered immunity and pathogen-associated molecular patterns (PAMP)-triggered immunity (PTI). Suppresses plant cell death as a part of the plant defense responses. Facilitates plant infection by altering the auxin content at the roots penetration points of the of the pathogen. The chain is Secreted RxLR effector protein PSE1 from Phytophthora nicotianae (Potato buckeye rot agent).